A 545-amino-acid polypeptide reads, in one-letter code: ATP synthase subunit alpha (545 aa).

ATP is bound at residue G172–T179.

Belongs to the ATPase alpha/beta chains family. As to quaternary structure, F-type ATPases have 2 components, CF(1) - the catalytic core - and CF(0) - the membrane proton channel. CF(1) has five subunits: alpha(3), beta(3), gamma(1), delta(1), epsilon(1). CF(0) has three main subunits: a(1), b(2) and c(9-12). The alpha and beta chains form an alternating ring which encloses part of the gamma chain. CF(1) is attached to CF(0) by a central stalk formed by the gamma and epsilon chains, while a peripheral stalk is formed by the delta and b chains.

Its subcellular location is the cell membrane. It catalyses the reaction ATP + H2O + 4 H(+)(in) = ADP + phosphate + 5 H(+)(out). Its function is as follows. Produces ATP from ADP in the presence of a proton gradient across the membrane. The alpha chain is a regulatory subunit. The polypeptide is ATP synthase subunit alpha (Corynebacterium urealyticum (strain ATCC 43042 / DSM 7109)).